We begin with the raw amino-acid sequence, 109 residues long: Large ribosomal subunit protein eL30 (109 aa).

The protein belongs to the eukaryotic ribosomal protein eL30 family.

The sequence is that of Large ribosomal subunit protein eL30 (RPL30) from Yarrowia lipolytica (strain CLIB 122 / E 150) (Yeast).